A 244-amino-acid chain; its full sequence is Small ribosomal subunit protein eS6 (244 aa).

Residues 185–244 (RLQRKRHMRAVKRRRYAKQREEEATYAKLLAKRKKEEREAHAKRRSSARESSLRESKSKA) form a disordered region. Over residues 186–201 (LQRKRHMRAVKRRRYA) the composition is skewed to basic residues. Basic and acidic residues predominate over residues 231-244 (SARESSLRESKSKA).

It belongs to the eukaryotic ribosomal protein eS6 family. In terms of processing, ribosomal protein S6 is the major substrate of protein kinases in eukaryote ribosomes.

In terms of biological role, component of the 40S small ribosomal subunit. Plays an important role in controlling cell growth and proliferation through the selective translation of particular classes of mRNA. The sequence is that of Small ribosomal subunit protein eS6 (RPS6) from Branchiostoma floridae (Florida lancelet).